Reading from the N-terminus, the 130-residue chain is Small ribosomal subunit protein uS11c (130 aa).

It belongs to the universal ribosomal protein uS11 family. In terms of assembly, part of the 30S ribosomal subunit.

The protein resides in the plastid. The protein localises to the chloroplast. The polypeptide is Small ribosomal subunit protein uS11c (Pinus koraiensis (Korean pine)).